Consider the following 245-residue polypeptide: Small ribosomal subunit protein uS3 (245 aa).

In terms of domain architecture, KH type-2 spans 39 to 107; sequence IRKAIREKLK…EVRVNLVEIR (69 aa). The segment at 216–245 is disordered; sequence DKRLETSGQSRARANTNQRGPASGAQAAGA. Residues 221–235 show a composition bias toward polar residues; the sequence is TSGQSRARANTNQRG.

It belongs to the universal ribosomal protein uS3 family. Part of the 30S ribosomal subunit. Forms a tight complex with proteins S10 and S14.

Functionally, binds the lower part of the 30S subunit head. Binds mRNA in the 70S ribosome, positioning it for translation. This chain is Small ribosomal subunit protein uS3, found in Hyphomonas neptunium (strain ATCC 15444).